The primary structure comprises 179 residues: Acireductone dioxygenase (179 aa).

The Fe(2+) site is built by H85, H87, E91, and H132. The Ni(2+) site is built by H85, H87, E91, and H132.

This sequence belongs to the acireductone dioxygenase (ARD) family. It depends on Fe(2+) as a cofactor. Requires Ni(2+) as cofactor.

Its subcellular location is the cytoplasm. It localises to the nucleus. It catalyses the reaction 1,2-dihydroxy-5-(methylsulfanyl)pent-1-en-3-one + O2 = 4-methylsulfanyl-2-oxobutanoate + formate + 2 H(+). It carries out the reaction 1,2-dihydroxy-5-(methylsulfanyl)pent-1-en-3-one + O2 = 3-(methylsulfanyl)propanoate + CO + formate + 2 H(+). Its pathway is amino-acid biosynthesis; L-methionine biosynthesis via salvage pathway; L-methionine from S-methyl-5-thio-alpha-D-ribose 1-phosphate: step 5/6. In terms of biological role, catalyzes 2 different reactions between oxygen and the acireductone 1,2-dihydroxy-3-keto-5-methylthiopentene (DHK-MTPene) depending upon the metal bound in the active site. Fe-containing acireductone dioxygenase (Fe-ARD) produces formate and 2-keto-4-methylthiobutyrate (KMTB), the alpha-ketoacid precursor of methionine in the methionine recycle pathway. Ni-containing acireductone dioxygenase (Ni-ARD) produces methylthiopropionate, carbon monoxide and formate, and does not lie on the methionine recycle pathway. The chain is Acireductone dioxygenase from Saccharomyces cerevisiae (strain ATCC 204508 / S288c) (Baker's yeast).